The following is a 307-amino-acid chain: Agmatinase (307 aa).

Mn(2+) is bound by residues His-128, Asp-151, His-153, Asp-155, Asp-232, and Asp-234.

It belongs to the arginase family. Agmatinase subfamily. Mn(2+) is required as a cofactor.

The catalysed reaction is agmatine + H2O = urea + putrescine. The protein operates within amine and polyamine biosynthesis; putrescine biosynthesis via agmatine pathway; putrescine from agmatine: step 1/1. In terms of biological role, catalyzes the formation of putrescine from agmatine. This chain is Agmatinase, found in Neisseria gonorrhoeae (strain ATCC 700825 / FA 1090).